A 184-amino-acid polypeptide reads, in one-letter code: MIQHDNNKMYGTTILSIRKDKSVVVIGDGQVSLGHTVIKSGAKKVRRLSGDSVIAGFAGATADAFTLFERLESKLDKHPGQLMRACVELAKDWRMDKYLRKLEAMMIVADKSISLVITGTGDVLEPEDGVAAIGSGGNFALSAARALIDIKGISIEEIAKKAMKIAGDICVYTNHNVVIEKIEE.

The active site involves Thr12. Na(+) is bound by residues Gly167, Cys170, and Thr173.

This sequence belongs to the peptidase T1B family. HslV subfamily. A double ring-shaped homohexamer of HslV is capped on each side by a ring-shaped HslU homohexamer. The assembly of the HslU/HslV complex is dependent on binding of ATP.

It is found in the cytoplasm. The enzyme catalyses ATP-dependent cleavage of peptide bonds with broad specificity.. With respect to regulation, allosterically activated by HslU binding. Functionally, protease subunit of a proteasome-like degradation complex believed to be a general protein degrading machinery. The protein is ATP-dependent protease subunit HslV of Wolbachia sp. subsp. Drosophila simulans (strain wRi).